The following is a 125-amino-acid chain: Small ribosomal subunit protein eS25 (125 aa).

Basic and acidic residues predominate over residues 1-23 (MPPKDDKKKKDAGKSAKKDKDPV). The tract at residues 1–38 (MPPKDDKKKKDAGKSAKKDKDPVNKSGGKAKKKKWSKG) is disordered. Over residues 28–38 (GKAKKKKWSKG) the composition is skewed to basic residues. Residue Lys43 is modified to N6-acetyllysine. Lys52 carries the post-translational modification N6-acetyllysine; alternate. An N6-succinyllysine; alternate modification is found at Lys52. An N6-acetyllysine mark is found at Lys60 and Lys66. Residue Lys94 is modified to N6-acetyllysine; alternate. An N6-succinyllysine; alternate modification is found at Lys94.

It belongs to the eukaryotic ribosomal protein eS25 family. As to quaternary structure, component of the small ribosomal subunit.

It is found in the cytoplasm. In terms of biological role, component of the small ribosomal subunit. The ribosome is a large ribonucleoprotein complex responsible for the synthesis of proteins in the cell. The polypeptide is Small ribosomal subunit protein eS25 (RPS25) (Homo sapiens (Human)).